The primary structure comprises 52 residues: Ovomucoid (52 aa).

The 51-residue stretch at 2-52 (VDCSDYPKPVCTLEEMPLCGSDNKTYGNKCNFCNAVVDSNGTLTLSHFGKC) folds into the Kazal-like domain. Disulfide bonds link Cys4-Cys34, Cys12-Cys31, and Cys20-Cys52. Residue Asn41 is glycosylated (N-linked (GlcNAc...) asparagine).

It is found in the secreted. The chain is Ovomucoid from Scythrops novaehollandiae (Channel-billed cuckoo).